A 183-amino-acid polypeptide reads, in one-letter code: Peptide deformylase (183 aa).

Residues cysteine 111 and histidine 154 each coordinate Fe cation. Residue glutamate 155 is part of the active site. Fe cation is bound at residue histidine 158.

The cofactor is Fe(2+).

The enzyme catalyses N-terminal N-formyl-L-methionyl-[peptide] + H2O = N-terminal L-methionyl-[peptide] + formate. In terms of biological role, removes the formyl group from the N-terminal Met of newly synthesized proteins. Requires at least a dipeptide for an efficient rate of reaction. N-terminal L-methionine is a prerequisite for activity but the enzyme has broad specificity at other positions. The polypeptide is Peptide deformylase (Staphylococcus aureus).